Reading from the N-terminus, the 410-residue chain is Retrovirus-related Pol polyprotein from type-1 retrotransposable element R1 2 (410 aa).

The 118-residue stretch at 1 to 118 (GCPQGSIGGP…SCFRYLGVNV (118 aa)) folds into the Reverse transcriptase domain. Residues 254 to 410 (SSVIKLERLV…RLNLELDVNG (157 aa)) form a nucleic acid-binding endonuclease region.

The enzyme catalyses DNA(n) + a 2'-deoxyribonucleoside 5'-triphosphate = DNA(n+1) + diphosphate. In Nasonia vitripennis (Parasitic wasp), this protein is Retrovirus-related Pol polyprotein from type-1 retrotransposable element R1 2.